A 157-amino-acid polypeptide reads, in one-letter code: Large ribosomal subunit protein uL13m (157 aa).

A mitochondrion-targeting transit peptide spans 1 to 29 (MSTLNGQTALAYAKVWHHVSAKNVPLGRL).

The protein belongs to the universal ribosomal protein uL13 family. As to quaternary structure, component of the mitochondrial large ribosomal subunit (mt-LSU). Mature yeast 74S mitochondrial ribosomes consist of a small (37S) and a large (54S) subunit. The 37S small subunit contains a 15S ribosomal RNA (15S mt-rRNA) and at least 32 different proteins. The 54S large subunit contains a 21S rRNA (21S mt-rRNA) and at least 45 different proteins.

It is found in the mitochondrion. Functionally, component of the mitochondrial ribosome (mitoribosome), a dedicated translation machinery responsible for the synthesis of mitochondrial genome-encoded proteins, including at least some of the essential transmembrane subunits of the mitochondrial respiratory chain. The mitoribosomes are attached to the mitochondrial inner membrane and translation products are cotranslationally integrated into the membrane. In Schizosaccharomyces pombe (strain 972 / ATCC 24843) (Fission yeast), this protein is Large ribosomal subunit protein uL13m.